The primary structure comprises 87 residues: Small ribosomal subunit protein bS18B (87 aa).

The protein belongs to the bacterial ribosomal protein bS18 family. Part of the 30S ribosomal subunit. Forms a tight heterodimer with protein bS6.

Functionally, binds as a heterodimer with protein bS6 to the central domain of the 16S rRNA, where it helps stabilize the platform of the 30S subunit. The protein is Small ribosomal subunit protein bS18B of Mycolicibacterium vanbaalenii (strain DSM 7251 / JCM 13017 / BCRC 16820 / KCTC 9966 / NRRL B-24157 / PYR-1) (Mycobacterium vanbaalenii).